Reading from the N-terminus, the 353-residue chain is Rhodopsin (353 aa).

The Extracellular portion of the chain corresponds to 1-36 (MNGTEGPYFYVPMVNTSGIVRSPYEYPQYYLVNPAA). N-linked (GlcNAc...) asparagine glycans are attached at residues Asn-2 and Asn-15. Residues 37–61 (YAALGAYMFLLILVGFPINFLTLYV) form a helical membrane-spanning segment. The Cytoplasmic segment spans residues 62 to 73 (TIEHKKLRTPLN). The chain crosses the membrane as a helical span at residues 74 to 96 (YILLNLAVADLFMVFGGFTTTMY). Residues 97–110 (TSMHGYFVLGRLGC) are Extracellular-facing. Cys-110 and Cys-187 are joined by a disulfide. The chain crosses the membrane as a helical span at residues 111-133 (NIEGFFATLGGEIALWSLVVLAI). A 'Ionic lock' involved in activated form stabilization motif is present at residues 134-136 (ERW). Residues 134 to 152 (ERWVVVCKPISNFRFGENH) are Cytoplasmic-facing. A helical transmembrane segment spans residues 153-173 (AIMGLAFTWLMALACAAPPLV). Topologically, residues 174–202 (GWSRYIPEGMQCSCGIDYYTRAEGFNNES) are extracellular. Residue Asn-200 is glycosylated (N-linked (GlcNAc...) asparagine). Residues 203–224 (FVIYMFICHFSIPLLVVFFCYG) traverse the membrane as a helical segment. At 225 to 252 (RLLCAVKEAAAAQQESETTQRAEREVTR) the chain is on the cytoplasmic side. The helical transmembrane segment at 253–274 (MVIMMVIAFLVCWLPYASVAWW) threads the bilayer. The Extracellular segment spans residues 275–286 (IFTHQGSDFGPV). The helical transmembrane segment at 287-308 (FMTIPAFFAKSSSIYNPMIYIC) threads the bilayer. Lys-296 is modified (N6-(retinylidene)lysine). At 309–353 (LNKQFRHCMITTLCCGKNPFEEEEGASTASKTEASSVSSSSVSPA) the chain is on the cytoplasmic side. S-palmitoyl cysteine attachment occurs at residues Cys-322 and Cys-323. The segment at 331-353 (EEGASTASKTEASSVSSSSVSPA) is disordered. The span at 334-353 (ASTASKTEASSVSSSSVSPA) shows a compositional bias: low complexity.

Belongs to the G-protein coupled receptor 1 family. Opsin subfamily. In terms of processing, phosphorylated on some or all of the serine and threonine residues present in the C-terminal region. Contains one covalently linked retinal chromophore.

It is found in the membrane. Its subcellular location is the cell projection. It localises to the cilium. The protein resides in the photoreceptor outer segment. Photoreceptor required for image-forming vision at low light intensity. While most salt water fish species use retinal as chromophore, most freshwater fish use 3-dehydroretinal, or a mixture of retinal and 3-dehydroretinal. Light-induced isomerization of 11-cis to all-trans retinal triggers a conformational change that activates signaling via G-proteins. Subsequent receptor phosphorylation mediates displacement of the bound G-protein alpha subunit by arrestin and terminates signaling. This is Rhodopsin (rho) from Diplodus vulgaris (Common two-banded seabream).